An 823-amino-acid polypeptide reads, in one-letter code: Protein phosphatase 1 regulatory subunit 29 (823 aa).

An N-terminal signal peptide occupies residues 1–22 (MLRLGLCAAALLCVCQPGAVRA). Residues 23 to 397 (DCWLIEGDKG…APSTSTTTHY (375 aa)) are Extracellular-facing. N-linked (GlcNAc...) asparagine glycosylation is present at asparagine 54. 5 LRR repeats span residues 56–77 (TVHD…SLNR), 80–101 (NLTD…AFLG), 104–125 (SLQV…MLRG), 128–149 (RLQF…AFSE), and 152–173 (SLIS…TFAS). N-linked (GlcNAc...) asparagine glycans are attached at residues asparagine 80, asparagine 85, and asparagine 117. In terms of domain architecture, LRRCT spans 185-247 (NPFNCECDLF…ITVLQAKCRN (63 aa)). Asparagine 205 and asparagine 247 each carry an N-linked (GlcNAc...) asparagine glycan. Residues 249 to 294 (SMPARPVSHPTPYSTDAQREPDENSGFNPDEILSVEPPASSTTDAS) form a disordered region. One can recognise a Fibronectin type-III domain in the interval 292-379 (DASAGPAIKL…FNHTCLTFTT (88 aa)). Residues 398 to 418 (IMTILGCLFGMVIVLGAVYYC) traverse the membrane as a helical segment. Over 419 to 823 (LRKRRMQEEK…WKGVSAQQKL (405 aa)) the chain is Cytoplasmic. Residues 590 to 624 (ASSAATPGALERPSFLSPPYKESSHHPLQRQLSAD) are disordered. A phosphoserine mark is found at serine 622, serine 671, and serine 675.

In terms of assembly, interacts with PPP1CA.

The protein localises to the membrane. Inhibits phosphatase activity of protein phosphatase 1 (PP1) complexes. The chain is Protein phosphatase 1 regulatory subunit 29 (Elfn2) from Mus musculus (Mouse).